The following is a 341-amino-acid chain: NADH-quinone oxidoreductase subunit H 2 (341 aa).

The next 8 helical transmembrane spans lie at 13–33, 82–102, 115–135, 161–181, 190–210, 242–262, 277–297, and 317–337; these read IVVI…IAYI, GVFL…WAVI, VGVL…IMAG, IGFV…TAIV, VLGW…VSAL, LFVL…TILF, WVPG…MFAM, and VFLP…QFAG.

It belongs to the complex I subunit 1 family. As to quaternary structure, NDH-1 is composed of 14 different subunits. Subunits NuoA, H, J, K, L, M, N constitute the membrane sector of the complex.

The protein localises to the cell inner membrane. It carries out the reaction a quinone + NADH + 5 H(+)(in) = a quinol + NAD(+) + 4 H(+)(out). Functionally, NDH-1 shuttles electrons from NADH, via FMN and iron-sulfur (Fe-S) centers, to quinones in the respiratory chain. The immediate electron acceptor for the enzyme in this species is believed to be ubiquinone. Couples the redox reaction to proton translocation (for every two electrons transferred, four hydrogen ions are translocated across the cytoplasmic membrane), and thus conserves the redox energy in a proton gradient. This subunit may bind ubiquinone. In Rhodopseudomonas palustris (strain HaA2), this protein is NADH-quinone oxidoreductase subunit H 2.